The sequence spans 292 residues: MPWIQFQLEVSAGQVERLSDQLSEAGAVAVTLLDATDQPLFEPPPGETPLWSRTRVNALFPMASDPDTLLQELKQDWAPESFPSYRWEILADQNWERAWMDHFKPLRFGSQLWVCPSWLPPPEPEAVNLLLDPGLAFGTGTHPTTALCLEWLTNANLNQACIIDYGCGSGILAIAALKLGATAAVAVDHDPQALLATQENATHNGVISQLQVSSPSELIEIKADFLVANILAEPLLRLASLFARLTYPGAYLILSGITSDQIQQILQTYNNWFTFNTPMIKENWVLLAGHRR.

S-adenosyl-L-methionine-binding residues include Thr-145, Gly-166, Asp-188, and Asn-229.

The protein belongs to the methyltransferase superfamily. PrmA family.

It localises to the cytoplasm. It catalyses the reaction L-lysyl-[protein] + 3 S-adenosyl-L-methionine = N(6),N(6),N(6)-trimethyl-L-lysyl-[protein] + 3 S-adenosyl-L-homocysteine + 3 H(+). Methylates ribosomal protein L11. The protein is Ribosomal protein L11 methyltransferase of Nitrosococcus oceani (strain ATCC 19707 / BCRC 17464 / JCM 30415 / NCIMB 11848 / C-107).